Here is a 114-residue protein sequence, read N- to C-terminus: Iron-sulfur cluster insertion protein ErpA (114 aa).

Iron-sulfur cluster contacts are provided by Cys-42, Cys-106, and Cys-108.

This sequence belongs to the HesB/IscA family. In terms of assembly, homodimer. Iron-sulfur cluster serves as cofactor.

Its function is as follows. Required for insertion of 4Fe-4S clusters for at least IspG. The chain is Iron-sulfur cluster insertion protein ErpA from Klebsiella pneumoniae (strain 342).